The sequence spans 305 residues: Phosphatidate cytidylyltransferase (305 aa).

The next 7 helical transmembrane spans lie at 24 to 44, 97 to 117, 124 to 144, 151 to 171, 202 to 222, 232 to 252, and 277 to 297; these read LLVF…AFIV, PEHV…HLVF, LGPI…SVPI, LYGF…IFLI, TVVG…IFYS, IAMP…GFFG, and MLDV…ILLI.

The protein belongs to the CDS family.

It localises to the cell membrane. The catalysed reaction is a 1,2-diacyl-sn-glycero-3-phosphate + CTP + H(+) = a CDP-1,2-diacyl-sn-glycerol + diphosphate. Its pathway is phospholipid metabolism; CDP-diacylglycerol biosynthesis; CDP-diacylglycerol from sn-glycerol 3-phosphate: step 3/3. The sequence is that of Phosphatidate cytidylyltransferase (cdsA) from Chlamydia muridarum (strain MoPn / Nigg).